The following is a 347-amino-acid chain: uncharacterized protein (347 aa).

The Zn(2+) site is built by cysteine 39, histidine 65, cysteine 95, cysteine 98, cysteine 101, cysteine 109, and glutamate 152.

The protein belongs to the zinc-containing alcohol dehydrogenase family. Requires Zn(2+) as cofactor.

This is an uncharacterized protein from Escherichia coli (strain K12).